A 274-amino-acid chain; its full sequence is Putative homeobox protein Meis3-like 1 (274 aa).

One can recognise an MEIS N-terminal domain in the interval glycine 12–lysine 65. 2 disordered regions span residues aspartate 108 to isoleucine 167 and asparagine 228 to glutamate 248. The segment covering glycine 123–glutamine 135 has biased composition (polar residues). Residues arginine 161–methionine 223 constitute a DNA-binding region (homeobox).

It belongs to the TALE/MEIS homeobox family.

The protein resides in the nucleus. The polypeptide is Putative homeobox protein Meis3-like 1 (MEIS3P1) (Homo sapiens (Human)).